Here is a 502-residue protein sequence, read N- to C-terminus: Nucleoside transporter 2 (502 aa).

Residues 1 to 30 are Cytoplasmic-facing; the sequence is MTTSSDSAMVNHTPSPWYKFGFKSFAEFNT. Residues 31–51 form a helical membrane-spanning segment; it reads YVTFVFLGMSIMMVASAVTSA. Residues 52–81 are Extracellular-facing; the sequence is PDFLTRYYVYATGDPDAVAETPLFWNNANT. A helical membrane pass occupies residues 82–102; the sequence is FYNAGTYVLQVLTELFSLTPF. The Cytoplasmic segment spans residues 103-111; it reads MRRIPLSVR. The chain crosses the membrane as a helical span at residues 112 to 132; that stretch reads LFVGLGIPFAELLLIIIVPAA. The Extracellular portion of the chain corresponds to 133 to 137; it reads TIKSQ. Residues 138 to 158 form a helical membrane-spanning segment; it reads HGAIAVIMVVACVGGFSKALC. The Cytoplasmic portion of the chain corresponds to 159-178; sequence DSCTNALVGPFPTKFMNGAQ. A helical membrane pass occupies residues 179 to 199; sequence WGLTVIALLMSIIQIILKVSM. Residues 200–210 are Extracellular-facing; it reads GTSFHDILTMS. Residues 211–231 traverse the membrane as a helical segment; sequence RIYFGICIGIQLFAIFELAIL. At 232–352 the chain is on the cytoplasmic side; it reads RFNPFAQKYI…SVFKRVYPML (121 aa). Positions 252–273 are disordered; sequence AQNNESTLEETAPSMNEPAAGD. The chain crosses the membrane as a helical span at residues 353–373; the sequence is VCVFLIYFTSLLTFPGVFFLV. The Extracellular segment spans residues 374 to 380; sequence STTSGWY. Residues 381–401 form a helical membrane-spanning segment; it reads MTVIVTLFNAGDFISRMVLMF. Topologically, residues 402–408 are cytoplasmic; the sequence is RPLRPSP. A helical membrane pass occupies residues 409 to 429; the sequence is KVVVAGTLGRLIIIPFLVLCV. Residues 430–436 lie on the Extracellular side of the membrane; sequence RGIIRGE. Residues 437-457 traverse the membrane as a helical segment; the sequence is ALPYVLITLLGLTNGYFGCMA. Residues 458 to 477 are Cytoplasmic-facing; sequence CIHCPRTTTLRYAGERSLAA. A helical membrane pass occupies residues 478 to 498; sequence MLSGISIMLGLCFGSNLSLAI. Topologically, residues 499–502 are extracellular; the sequence is TLTH.

This sequence belongs to the SLC29A/ENT transporter (TC 2.A.57) family.

It localises to the cell membrane. The catalysed reaction is inosine(in) = inosine(out). It catalyses the reaction guanosine(in) = guanosine(out). High affinity transporter for inosine and guanosine. The sequence is that of Nucleoside transporter 2 from Crithidia fasciculata.